The sequence spans 743 residues: Serine/threonine-protein kinase GD17699 (743 aa).

Residues 54–78 (NVQEDNSYNRDCDSPVSSSSEPEKE) form a disordered region. Doublecortin domains follow at residues 154–240 (LRIK…VEYN) and 309–392 (RIVT…AEDF). Positions 473 to 731 (YTLGRIIGDG…SEDILDHPWT (259 aa)) constitute a Protein kinase domain. ATP-binding positions include 479–487 (IGDGNFAIV) and Lys-502. Asp-594 functions as the Proton acceptor in the catalytic mechanism.

It belongs to the protein kinase superfamily. CAMK Ser/Thr protein kinase family. CaMK subfamily.

It carries out the reaction L-seryl-[protein] + ATP = O-phospho-L-seryl-[protein] + ADP + H(+). The catalysed reaction is L-threonyl-[protein] + ATP = O-phospho-L-threonyl-[protein] + ADP + H(+). This Drosophila simulans (Fruit fly) protein is Serine/threonine-protein kinase GD17699.